The primary structure comprises 286 residues: Nucleotide-binding protein Sfum_2066 (286 aa).

Residue 8–15 (GLSGSGKS) participates in ATP binding. 59–62 (DIRE) contributes to the GTP binding site.

The protein belongs to the RapZ-like family.

Its function is as follows. Displays ATPase and GTPase activities. The polypeptide is Nucleotide-binding protein Sfum_2066 (Syntrophobacter fumaroxidans (strain DSM 10017 / MPOB)).